Consider the following 702-residue polypeptide: Ribosomal RNA large subunit methyltransferase K/L (702 aa).

One can recognise a THUMP domain in the interval Leu-43–Leu-154.

The protein belongs to the methyltransferase superfamily. RlmKL family.

Its subcellular location is the cytoplasm. The enzyme catalyses guanosine(2445) in 23S rRNA + S-adenosyl-L-methionine = N(2)-methylguanosine(2445) in 23S rRNA + S-adenosyl-L-homocysteine + H(+). It catalyses the reaction guanosine(2069) in 23S rRNA + S-adenosyl-L-methionine = N(2)-methylguanosine(2069) in 23S rRNA + S-adenosyl-L-homocysteine + H(+). Its function is as follows. Specifically methylates the guanine in position 2445 (m2G2445) and the guanine in position 2069 (m7G2069) of 23S rRNA. This chain is Ribosomal RNA large subunit methyltransferase K/L, found in Shigella flexneri serotype 5b (strain 8401).